Here is an 856-residue protein sequence, read N- to C-terminus: Inactive rhomboid protein 2 (856 aa).

The interval 1–115 (MASADKNGGS…PGFRRQASLS (115 aa)) is disordered. At 1-409 (MASADKNGGS…HRPYFTYWLT (409 aa)) the chain is on the cytoplasmic side. The residue at position 90 (serine 90) is a Phosphoserine. The segment covering 94–106 (PRSRWQESSEKRP) has biased composition (basic and acidic residues). 2 positions are modified to phosphoserine: serine 113 and serine 117. The disordered stretch occupies residues 165–184 (PSQEAPSFQGTESPKPCKMP). The segment at 191-271 (ARGRAFRHPE…GQRCRVVKRS (81 aa)) is involved in interaction with FRMD8. Serine 323, serine 325, and serine 328 each carry phosphoserine. Residues 410–430 (FVHVIITLLVICTYGIAPVGF) form a helical membrane-spanning segment. The Lumenal segment spans residues 431–660 (AQHVTTQLVL…PDQFYRLWLS (230 aa)). Residues 531-553 (GPPMDKSDLGQKRTSGAVCHQDP) are disordered. A helical membrane pass occupies residues 661–681 (LFLHAGVVHCLVSVVFQMTIL). At 682–692 (RDLEKLAGWHR) the chain is on the cytoplasmic side. The chain crosses the membrane as a helical span at residues 693–713 (IAIIFILSGITGNLASAIFLP). The Lumenal segment spans residues 714-715 (YR). A helical membrane pass occupies residues 716 to 736 (AEVGPAGSQFGLLACLFVELF). The Cytoplasmic segment spans residues 737 to 747 (QSWPLLERPWK). A helical membrane pass occupies residues 748–768 (AFLNLSAIVLFLFICGLLPWI). The Lumenal segment spans residues 769-773 (DNIAH). Residues 774–794 (IFGFLSGLLLAFAFLPYITFG) form a helical membrane-spanning segment. The Cytoplasmic segment spans residues 795-802 (TSDKYRKR). Residues 803–823 (ALILVSLLAFAGLFAALVLWL) traverse the membrane as a helical segment. At 824 to 856 (YIYPINWPWIEHLTCFPFTSRFCEKYELDQVLH) the chain is on the lumenal side.

This sequence belongs to the peptidase S54 family. In terms of assembly, interacts with EGF. Interacts (via cytoplasmic N-terminus) with FRMD8/iTAP; this interaction leads to mutual protein stabilization. Interacts with ADAM17/TACE. Found in the epidermis and esophageal epithelium.

It localises to the endoplasmic reticulum membrane. Its subcellular location is the cell membrane. In terms of biological role, regulates ADAM17 protease, a sheddase of the epidermal growth factor (EGF) receptor ligands and TNF, thereby plays a role in sleep, cell survival, proliferation, migration and inflammation. Does not exhibit any protease activity on its own. The protein is Inactive rhomboid protein 2 (RHBDF2) of Homo sapiens (Human).